A 156-amino-acid polypeptide reads, in one-letter code: Endoribonuclease YbeY (156 aa).

3 residues coordinate Zn(2+): His-117, His-121, and His-127.

It belongs to the endoribonuclease YbeY family. It depends on Zn(2+) as a cofactor.

The protein resides in the cytoplasm. In terms of biological role, single strand-specific metallo-endoribonuclease involved in late-stage 70S ribosome quality control and in maturation of the 3' terminus of the 16S rRNA. This chain is Endoribonuclease YbeY, found in Herminiimonas arsenicoxydans.